Consider the following 700-residue polypeptide: Polyphosphate kinase (700 aa).

Asn-45 provides a ligand contact to ATP. Mg(2+)-binding residues include Arg-373 and Arg-403. A PLD phosphodiesterase 1 domain is found at 428-462; the sequence is PGMKIHAKLLLITRREEQGFVRYAHIGTGNFHERT. The active-site Phosphohistidine intermediate is His-433. The ATP site is built by Tyr-466, Arg-562, and His-590. One can recognise a PLD phosphodiesterase 2 domain in the interval 585-615; that stretch reads DRFLEHPRVLVVHNDGDPQVFISSADWMERN.

The protein belongs to the polyphosphate kinase 1 (PPK1) family. Mg(2+) is required as a cofactor. In terms of processing, an intermediate of this reaction is the autophosphorylated ppk in which a phosphate is covalently linked to a histidine residue through a N-P bond.

The enzyme catalyses [phosphate](n) + ATP = [phosphate](n+1) + ADP. Its function is as follows. Catalyzes the reversible transfer of the terminal phosphate of ATP to form a long-chain polyphosphate (polyP). This chain is Polyphosphate kinase, found in Vibrio vulnificus (strain CMCP6).